A 152-amino-acid polypeptide reads, in one-letter code: 3-dehydroquinate dehydratase (152 aa).

The Proton acceptor role is filled by Tyr26. Substrate is bound by residues Asn78, His84, and Asp91. His104 (proton donor) is an active-site residue. Substrate is bound by residues 105–106 and Arg115; that span reads LS.

Belongs to the type-II 3-dehydroquinase family. Homododecamer.

The catalysed reaction is 3-dehydroquinate = 3-dehydroshikimate + H2O. It participates in metabolic intermediate biosynthesis; chorismate biosynthesis; chorismate from D-erythrose 4-phosphate and phosphoenolpyruvate: step 3/7. Catalyzes a trans-dehydration via an enolate intermediate. This chain is 3-dehydroquinate dehydratase, found in Idiomarina loihiensis (strain ATCC BAA-735 / DSM 15497 / L2-TR).